An 84-amino-acid chain; its full sequence is MPQIKSAMKRVKTIEKANNRNASQLSTMRSAIKKFKAAQAAGNEEAADLLKAATRAIDMASTKGLIHANKAGRDKSRLNKMMAK.

The protein belongs to the bacterial ribosomal protein bS20 family.

Its function is as follows. Binds directly to 16S ribosomal RNA. This Latilactobacillus sakei subsp. sakei (strain 23K) (Lactobacillus sakei subsp. sakei) protein is Small ribosomal subunit protein bS20.